A 169-amino-acid polypeptide reads, in one-letter code: Small ribosomal subunit protein bS18c (169 aa).

Positions 1-61 are disordered; sequence MYTSKQPFLK…RRPRIGPGDR (61 aa). Basic residues predominate over residues 27–55; it reads QTFRKSKQTFRKFKQPFRKSKQPFRRRPR.

It belongs to the bacterial ribosomal protein bS18 family. In terms of assembly, part of the 30S ribosomal subunit.

It localises to the plastid. It is found in the chloroplast. This chain is Small ribosomal subunit protein bS18c, found in Agrostis stolonifera (Creeping bentgrass).